We begin with the raw amino-acid sequence, 255 residues long: tRNA (guanine-N(7)-)-methyltransferase (255 aa).

The tract at residues 1–31 (MMHDDPNEAGLPPHNDAIPDETAEGADEVNP) is disordered. Positions 18–27 (IPDETAEGAD) are enriched in acidic residues. 4 residues coordinate S-adenosyl-L-methionine: Glu86, Glu111, Asp138, and Asp161. The active site involves Asp161. Residues Lys165, Asp197, and 232-235 (TKFE) each bind substrate.

The protein belongs to the class I-like SAM-binding methyltransferase superfamily. TrmB family.

It carries out the reaction guanosine(46) in tRNA + S-adenosyl-L-methionine = N(7)-methylguanosine(46) in tRNA + S-adenosyl-L-homocysteine. It participates in tRNA modification; N(7)-methylguanine-tRNA biosynthesis. In terms of biological role, catalyzes the formation of N(7)-methylguanine at position 46 (m7G46) in tRNA. The polypeptide is tRNA (guanine-N(7)-)-methyltransferase (Burkholderia cenocepacia (strain HI2424)).